The following is a 675-amino-acid chain: L-type lectin-domain containing receptor kinase IX.2 (675 aa).

Residues 1–35 (MLYFIFCQNLSSSSSMSNSILFLSLFLFLPFVVDS) form the signal peptide. Residues asparagine 9, asparagine 39, asparagine 110, asparagine 146, asparagine 179, asparagine 186, asparagine 191, and asparagine 212 are each glycosylated (N-linked (GlcNAc...) asparagine). The tract at residues 36–269 (LYFNFTSFRQ…EEHRLLSWEL (234 aa)) is legume-lectin like. Residues 36–281 (LYFNFTSFRQ…SLDSDKADSR (246 aa)) lie on the Extracellular side of the membrane. A helical transmembrane segment spans residues 282 to 302 (IGLVIGISASGFVFLTFMVIT). The Cytoplasmic portion of the chain corresponds to 303 to 675 (TVVVWSRKQR…VTFSGIEYGR (373 aa)). The region spanning 350 to 631 (FSSHRKLGEG…KQGIQVMNFE (282 aa)) is the Protein kinase domain. ATP-binding positions include 356–364 (LGEGGFGAV) and lysine 379. Residue aspartate 475 is the Proton acceptor of the active site.

It in the C-terminal section; belongs to the protein kinase superfamily. Ser/Thr protein kinase family. The protein in the N-terminal section; belongs to the leguminous lectin family. Interacts with ABCG40.

Its subcellular location is the cell membrane. It catalyses the reaction L-seryl-[protein] + ATP = O-phospho-L-seryl-[protein] + ADP + H(+). The enzyme catalyses L-threonyl-[protein] + ATP = O-phospho-L-threonyl-[protein] + ADP + H(+). Functionally, promotes hydrogen peroxide H(2)O(2) production and cell death. Involved in resistance response to the pathogenic oomycetes Phytophthora infestans and Phytophthora capsici. This Arabidopsis thaliana (Mouse-ear cress) protein is L-type lectin-domain containing receptor kinase IX.2.